We begin with the raw amino-acid sequence, 613 residues long: DBH-like monooxygenase protein 1 (613 aa).

The signal sequence occupies residues 1 to 19; that stretch reads MCGWPLLVLWALLPATAAG. The Lumenal portion of the chain corresponds to 20 to 587; that stretch reads SPGRSYPHRV…PLVCEKAASP (568 aa). A DOMON domain is found at 35–148; sequence GKYWLHWGRQ…STVRVIWAYH (114 aa). N-linked (GlcNAc...) asparagine glycosylation occurs at asparagine 114. Tyrosine 203 is an active-site residue. Cystine bridges form between cysteine 205/cysteine 257 and cysteine 242/cysteine 269. Residues histidine 235 and histidine 236 each coordinate Cu cation. Asparagine 247 carries an N-linked (GlcNAc...) asparagine glycan. Histidine 307, histidine 389, histidine 391, and methionine 464 together coordinate Cu cation. Intrachain disulfides connect cysteine 364–cysteine 480, cysteine 368–cysteine 550, and cysteine 443–cysteine 465. The active site involves histidine 389. Asparagine 476 and asparagine 517 each carry an N-linked (GlcNAc...) asparagine glycan. A helical transmembrane segment spans residues 588–608; it reads PLHGIFSLRLLTCALLLGSML.

Belongs to the copper type II ascorbate-dependent monooxygenase family. Cu(2+) serves as cofactor. N-glycosylated. Broadly exprressed, with highest levels in salivary gland and ovary.

It localises to the endoplasmic reticulum membrane. In Mus musculus (Mouse), this protein is DBH-like monooxygenase protein 1 (Moxd1).